The chain runs to 757 residues: Protein aardvark (757 aa).

3 disordered regions span residues 39-63 (SSINNNINNNNNNNNNNNSNNDSNN), 122-166 (LEEN…SSIL), and 256-285 (SSNGSTNNHNNNNNNNHHHHSNNGNLIESS). Residues 121–205 (ILEENNNNNN…FNQFNFLEGI (85 aa)) are a coiled coil. Low complexity-rich tracts occupy residues 125 to 164 (NNNNNNNNNNNNNNNNNNNNNNNNNNNNNNNNNSSSSSSS) and 256 to 270 (SSNGSTNNHNNNNNN). Residues 310 to 356 (QFDIFLIPTEMLVHLLSFLSANDLWRISLTCKRIWYIVDVFKFWELL) enclose the F-box domain. ARM repeat units follow at residues 454–498 (GGIS…SNDN), 506–548 (GGIQ…VAIE), 549–591 (GGIQ…SAKE), 592–634 (GGIG…ISRQ), 635–678 (NGIQ…IARE), and 679–723 (GGIN…RSGG).

The protein belongs to the beta-catenin family.

The protein localises to the cytoplasm. It is found in the cell junction. Its function is as follows. Required to regulate pattern formation during multi-cellular stages of development and for the formation of adherens junctions. Plays a structural role during the regulation of stalk formation. Involved in cell signaling. Required for spore-cell differentiation. Overexpression increases number and size of cell junctions and reduces spore-cell formation. The polypeptide is Protein aardvark (aarA) (Dictyostelium discoideum (Social amoeba)).